The primary structure comprises 328 residues: Glycerol-3-phosphate dehydrogenase [NAD(P)+] (328 aa).

Positions 11, 30, and 103 each coordinate NADPH. Sn-glycerol 3-phosphate contacts are provided by Lys-103, Gly-132, and Ser-134. Ala-136 contacts NADPH. Lys-187, Asp-240, Ser-250, Arg-251, and Asn-252 together coordinate sn-glycerol 3-phosphate. The active-site Proton acceptor is the Lys-187. Residue Arg-251 participates in NADPH binding. Residues Val-275 and Glu-277 each contribute to the NADPH site.

It belongs to the NAD-dependent glycerol-3-phosphate dehydrogenase family.

It is found in the cytoplasm. It catalyses the reaction sn-glycerol 3-phosphate + NAD(+) = dihydroxyacetone phosphate + NADH + H(+). The catalysed reaction is sn-glycerol 3-phosphate + NADP(+) = dihydroxyacetone phosphate + NADPH + H(+). The protein operates within membrane lipid metabolism; glycerophospholipid metabolism. Its function is as follows. Catalyzes the reduction of the glycolytic intermediate dihydroxyacetone phosphate (DHAP) to sn-glycerol 3-phosphate (G3P), the key precursor for phospholipid synthesis. The polypeptide is Glycerol-3-phosphate dehydrogenase [NAD(P)+] (Aromatoleum aromaticum (strain DSM 19018 / LMG 30748 / EbN1) (Azoarcus sp. (strain EbN1))).